Here is a 648-residue protein sequence, read N- to C-terminus: Serine/threonine-protein kinase PrkC (648 aa).

The Cytoplasmic segment spans residues 1 to 330 (MLIGKRISGR…KKNGKRKKWP (330 aa)). The 261-residue stretch at 11–271 (YQILRVIGGG…DMEADIKTAF (261 aa)) folds into the Protein kinase domain. Residues 17-25 (IGGGGMANV) and Lys40 contribute to the ATP site. Asp134 acts as the Proton acceptor in catalysis. Thr162, Thr163, Thr165, and Thr167 each carry phosphothreonine; by autocatalysis. At Ser214 the chain carries Phosphoserine; by autocatalysis. A phosphothreonine; by autocatalysis mark is found at Thr290, Thr313, and Thr320. Residues 331–351 (WVLLTICLVFITAGILAVTVF) form a helical membrane-spanning segment. At 352-648 (PSLFMPKDVK…YKTIEYPKDE (297 aa)) the chain is on the extracellular side. PASTA domains lie at 356-424 (MPKD…YKST), 425-492 (GKAK…TVSI), and 493-559 (GPED…TFSL).

It belongs to the protein kinase superfamily. Ser/Thr protein kinase family. Homodimer. In terms of processing, autophosphorylation on threonine residue(s) and serine residue considerably increases the kinase activity of the protein. Dephosphorylated in vitro by PrpC.

The protein localises to the spore membrane. It carries out the reaction L-seryl-[protein] + ATP = O-phospho-L-seryl-[protein] + ADP + H(+). The enzyme catalyses L-threonyl-[protein] + ATP = O-phospho-L-threonyl-[protein] + ADP + H(+). Bryostatin activates PrkC activity and induces germination, whereas staurosporine inhibits PrkC and significantly reduced peptidoglycan-dependent germination. Kinase activity of isolated N-terminus stimulated by poly-L-lysine or myelin basic protein. Functionally, protein kinase that is responsible for triggering spore germination in response to muropeptides, signaling bacteria to exit dormancy. PrkC is thus a germination receptor that binds peptidoglycan fragments containing m-Dpm (meso-diaminopimelate), which act as spore germinants. Autophosphorylates and phosphorylates EF-G (elongation factor G, fusA); the latter modification is likely necessary for germination in response to peptidoglycan. Another group did not detect phosphorylation of EF-G. PrkC is a substrate in vitro of the cotranscribed phosphatase PrpC, which suggests that they form a functional couple in vivo. Might also be involved in sporulation and biofilm formation. Does not seem to be involved in stress response. The polypeptide is Serine/threonine-protein kinase PrkC (prkC) (Bacillus subtilis (strain 168)).